We begin with the raw amino-acid sequence, 1124 residues long: Regulator of nonsense transcripts 1 (1124 aa).

Residues Met-1–Glu-410 form a sufficient for interaction with RENT2 region. Ser-10 and Ser-31 each carry phosphoserine. A disordered region spans residues Thr-39 to Leu-69. Over residues Pro-51–Ala-66 the composition is skewed to gly residues. Positions Thr-110 to Asn-267 constitute a Upf1 CH-rich domain. Residues Cys-118, Cys-121, Cys-132, Ser-135, Cys-140, His-150, His-154, Cys-160, Cys-178, Cys-181, Cys-204, and Cys-208 each contribute to the Zn(2+) site. The interval Cys-118–His-150 is C3H. Positions Cys-132–Cys-160 are CC/SHH/C. The segment at Cys-178–Cys-208 is C4. ATP is bound by residues Gln-481 and Gly-501–Thr-505. At Ser-560 the chain carries Phosphoserine. Positions 671, 708, and 839 each coordinate ATP. Residue Ser-951 is modified to Phosphoserine. Disordered regions lie at residues Phe-1004–Gln-1053 and Ser-1066–Asp-1091. Arg-1014 is modified (omega-N-methylarginine). The segment covering Lys-1020–Asn-1029 has biased composition (basic residues). Residues Pro-1036–Gln-1053 are compositionally biased toward polar residues. Over residues Ser-1066–Pro-1081 the composition is skewed to low complexity. Ser-1084, Ser-1102, Ser-1105, and Ser-1122 each carry phosphoserine. Short sequence motifs ([ST]-Q motif) lie at residues Ser-1084 to Gln-1085 and Ser-1102 to Gln-1103. The segment at Ser-1105–Tyr-1124 is disordered.

It belongs to the DNA2/NAM7 helicase family. As to quaternary structure, found in a post-splicing messenger ribonucleoprotein (mRNP) complex. Associates with the exon junction complex (EJC). Associates with the SGM1C complex; is phosphorylated by the complex kinase component SGM1. Part of a complex composed of SMG1, DHX34 and UPF1; within the complex DHX34 acts as a scaffolding protein to facilitate SMG1 phosphorylation of UPF1. Interacts with UPF2. Interacts with UPF3A and UPF3B. Interacts with EST1A. Interacts with SLBP. Interacts (when hyperphosphorylated) with PNRC2. Interacts with AGO1 and AGO2. Interacts with GSPT2. Interacts with isoform 1 and isoform 5 of ADAR/ADAR1. Interacts with SMG7. Interacts with ZC3H12A; this interaction occurs in a mRNA translationally active- and termination-dependent manner and is essential for ZC3H12A-mediated degradation of target mRNAs. Interacts with CPSF6. Interacts with MOV10; the interaction is direct and RNA-dependent. Interacts with SHFL; the interaction increases in the presence of RNA. Interacts with UPF2 and DDX4; interactions are mediated by TDRD6. Interacts with DHX34 and PABPC1/PABP1; the interactions are RNA-independent. Interacts with RBM46. In terms of processing, phosphorylated by SMG1; required for formation of mRNA surveillance complexes. Localizes in male germ cells.

It localises to the cytoplasm. The protein resides in the P-body. Its subcellular location is the nucleus. It is found in the perinuclear region. The enzyme catalyses ATP + H2O = ADP + phosphate + H(+). RNA-dependent helicase required for nonsense-mediated decay (NMD) of aberrant mRNAs containing premature stop codons and modulates the expression level of normal mRNAs. Is recruited to mRNAs upon translation termination and undergoes a cycle of phosphorylation and dephosphorylation; its phosphorylation appears to be a key step in NMD. Recruited by release factors to stalled ribosomes together with the SMG1C protein kinase complex to form the transient SURF (SMG1-UPF1-eRF1-eRF3) complex. In EJC-dependent NMD, the SURF complex associates with the exon junction complex (EJC) (located 50-55 or more nucleotides downstream from the termination codon) through UPF2 and allows the formation of an UPF1-UPF2-UPF3 surveillance complex which is believed to activate NMD. Phosphorylated UPF1 is recognized by EST1B/SMG5, SMG6 and SMG7 which are thought to provide a link to the mRNA degradation machinery involving exonucleolytic and endonucleolytic pathways, and to serve as adapters to protein phosphatase 2A (PP2A), thereby triggering UPF1 dephosphorylation and allowing the recycling of NMD factors. UPF1 can also activate NMD without UPF2 or UPF3, and in the absence of the NMD-enhancing downstream EJC indicative for alternative NMD pathways. Plays a role in replication-dependent histone mRNA degradation at the end of phase S; the function is independent of UPF2. For the recognition of premature termination codons (PTC) and initiation of NMD a competitive interaction between UPF1 and PABPC1 with the ribosome-bound release factors is proposed. The ATPase activity of UPF1 is required for disassembly of mRNPs undergoing NMD. Together with UPF2 and dependent on TDRD6, mediates the degradation of mRNA harboring long 3'UTR by inducing the NMD machinery. Also capable of unwinding double-stranded DNA and translocating on single-stranded DNA. This chain is Regulator of nonsense transcripts 1, found in Mus musculus (Mouse).